The sequence spans 463 residues: DDB1- and CUL4-associated factor 12-like protein 1 (463 aa).

Positions 1-35 (MAQQQTGSRKRKAPAVEADAESSPSQGLAAADGEG) are disordered. 6 WD repeats span residues 87–137 (LTER…PLLR), 138–184 (DSEA…SLDP), 185–252 (LCLG…DVEA), 253–297 (IPRA…ALSR), 298–341 (LLSI…QQNI), and 342–376 (RPLC…LFYD).

This sequence belongs to the WD repeat DCAF12 family.

This is DDB1- and CUL4-associated factor 12-like protein 1 (DCAF12L1) from Homo sapiens (Human).